A 497-amino-acid polypeptide reads, in one-letter code: MPNIEADRVTSVPENNDCKSKSQPLRNNLHETVKSYSIQGAATANIEPPAERPYPWGCPVTHTKEKFYTICADYAFLNQATSLCKSSSSVCSSSSEDKSALSNTINYIDLQTSESDSVYNEDASLESLSSNLGTRPLAWEIDKSDFSTMTSKLKRSGVKKQTPKKKPDRKAKPLRDCPQHLILDDVKQRKVLDLRRWYCISRPQYKTSCGISSLVSCWNFLYSTLGAGSLPPITQEEALHILGFQPPFEEIRFGPFTGNTTLMRWFRQINDHFHVKGCSYVLYKPHGKNKTAGETAVGALSKLTQGLKEDSTAYVYHCQNHYFCPIGFEATPVKASKAYRGQLFPHEVEYWILIGEPSRKHPTIHCKKWADIVTDLNTQNPEYFDIRHTERGLQYRKTKKGGNLHCLLAFQRLSWQRFGPWPLQLGTLRPEPQPPVQGRRIPKSESEDNVSKKQHGRLGRSFSAGFQQELAWKRMCNIRERRGSGSPESDTDYEGND.

Disordered regions lie at residues 1–24 (MPNI…KSQP), 150–173 (TSKL…KAKP), 426–462 (GTLR…GRSF), and 478–497 (IRER…EGND). A compositionally biased stretch (basic residues) spans 152-169 (KLKRSGVKKQTPKKKPDR). Residues 442 to 451 (PKSESEDNVS) show a composition bias toward basic and acidic residues.

Belongs to the BIVM family.

Its subcellular location is the cytoplasm. It is found in the nucleus. In Xenopus laevis (African clawed frog), this protein is Basic immunoglobulin-like variable motif-containing protein (bivm).